Consider the following 245-residue polypeptide: MQRDPGTALVLFSGGQDSTTCLAWALENFERVETIGFDYGQRHRIELDVRPYLLERIRTDFPAWRGRLGGDHMIDMAVLGQISDTALTRGVEVALNANGLPNTFVPGRNLLFLGFAAALAYRLSAKHLVIGVAETDRFSYPDCRDDAVKAIQLALNLGMEKRFIIHTPLMHRDKAQTWALADWLGGEALVKLICEGSHTCYSGDREHRHSWGFGCGTCIECNLRAAGWEQFRSCKEAPVTAHEMT.

An ATP-binding site is contributed by 12 to 22; sequence FSGGQDSTTCL. Zn(2+) is bound by residues Cys200, Cys215, Cys218, and Cys221.

Belongs to the QueC family. The cofactor is Zn(2+).

The enzyme catalyses 7-carboxy-7-deazaguanine + NH4(+) + ATP = 7-cyano-7-deazaguanine + ADP + phosphate + H2O + H(+). The protein operates within purine metabolism; 7-cyano-7-deazaguanine biosynthesis. Catalyzes the ATP-dependent conversion of 7-carboxy-7-deazaguanine (CDG) to 7-cyano-7-deazaguanine (preQ(0)). This chain is 7-cyano-7-deazaguanine synthase 2, found in Mesorhizobium japonicum (strain LMG 29417 / CECT 9101 / MAFF 303099) (Mesorhizobium loti (strain MAFF 303099)).